The primary structure comprises 539 residues: Propionyl-CoA carboxylase beta chain, mitochondrial (539 aa).

Residues 1 to 28 (MAAAVRVTAARARLRVVVRSLHAGVRSL) constitute a mitochondrion transit peptide. The CoA carboxyltransferase N-terminal domain maps to 32 to 290 (PVSVNERIEN…SNQDPAPIRE (259 aa)). The carboxyltransferase stretch occupies residues 32–533 (PVSVNERIEN…SKKVQRPWRK (502 aa)). Serine 71 carries the phosphoserine modification. Lysine 99 is subject to N6-acetyllysine; alternate. An N6-succinyllysine; alternate modification is found at lysine 99. One can recognise a CoA carboxyltransferase C-terminal domain in the interval 294-533 (PSDRLVPELD…SKKVQRPWRK (240 aa)). The acyl-CoA binding stretch occupies residues 325–358 (DERDFFEIMPNYAKNIIVGFARMNGRTVGIVGNQ). Lysine 474 and lysine 489 each carry N6-acetyllysine; alternate. An N6-succinyllysine; alternate mark is found at lysine 474 and lysine 489.

This sequence belongs to the AccD/PCCB family. In terms of assembly, the holoenzyme is a dodecamer composed of 6 PCCA/alpha subunits and 6 PCCB/beta subunits.

It is found in the mitochondrion matrix. The catalysed reaction is propanoyl-CoA + hydrogencarbonate + ATP = (S)-methylmalonyl-CoA + ADP + phosphate + H(+). It catalyses the reaction butanoyl-CoA + hydrogencarbonate + ATP = (2S)-ethylmalonyl-CoA + ADP + phosphate + H(+). It functions in the pathway metabolic intermediate metabolism; propanoyl-CoA degradation; succinyl-CoA from propanoyl-CoA: step 1/3. Its function is as follows. This is one of the 2 subunits of the biotin-dependent propionyl-CoA carboxylase (PCC), a mitochondrial enzyme involved in the catabolism of odd chain fatty acids, branched-chain amino acids isoleucine, threonine, methionine, and valine and other metabolites. Propionyl-CoA carboxylase catalyzes the carboxylation of propionyl-CoA/propanoyl-CoA to D-methylmalonyl-CoA/(S)-methylmalonyl-CoA. Within the holoenzyme, the alpha subunit catalyzes the ATP-dependent carboxylation of the biotin carried by the biotin carboxyl carrier (BCC) domain, while the beta subunit then transfers the carboxyl group from carboxylated biotin to propionyl-CoA. Propionyl-CoA carboxylase also significantly acts on butyryl-CoA/butanoyl-CoA, which is converted to ethylmalonyl-CoA/(2S)-ethylmalonyl-CoA at a much lower rate. Other alternative minor substrates include (2E)-butenoyl-CoA/crotonoyl-CoA. In Sus scrofa (Pig), this protein is Propionyl-CoA carboxylase beta chain, mitochondrial.